The primary structure comprises 317 residues: Spore protein CgeB (317 aa).

Its function is as follows. May be involved in maturation of the outermost layer of the spore. May act as a glycosyltransferase that contributes to the glycosylation state of the spore. The polypeptide is Spore protein CgeB (Bacillus subtilis (strain 168)).